Consider the following 301-residue polypeptide: Putative S-adenosyl-L-methionine-dependent methyltransferase Mflv_5024 (301 aa).

Residues D129 and 158-159 (DL) each bind S-adenosyl-L-methionine.

It belongs to the UPF0677 family.

Functionally, exhibits S-adenosyl-L-methionine-dependent methyltransferase activity. In Mycolicibacterium gilvum (strain PYR-GCK) (Mycobacterium gilvum (strain PYR-GCK)), this protein is Putative S-adenosyl-L-methionine-dependent methyltransferase Mflv_5024.